A 28-amino-acid polypeptide reads, in one-letter code: Conotoxin Vi14b (28 aa).

Disulfide bonds link Cys-4–Cys-21 and Cys-7–Cys-18. An N6-acetyllysine mark is found at Lys-15 and Lys-25.

The two N6-acetyllysines at position 15 and 25 have been deduced from the mass difference of 42. They are not common in venom proteins. As to expression, expressed by the venom gland.

Its subcellular location is the secreted. Functionally, in vitro, inhibits proliferation of the mice ovarian cancer cells ID8. This Conus virgo (Virgin cone) protein is Conotoxin Vi14b.